Reading from the N-terminus, the 401-residue chain is MLRWMTAGESHGPALVAVLEGMVAGVEVTTADIAAELERRKLGFGRSPRMNFEADELEIIGGVRHGRTQGGPVAVRIANTEWPKWEQVMAADPVDPDVLASLARNEPLTRPRPGHADLAGMQKYGFEESRPVLERASARETAARVAVGTVARHFLRQLLGVEILSHVVSLGGVSAESDHLPGPDDLKAIDDNPVRAFGDAATERMMAEVDAAKKDGDTLGGVVEVIAYGLPPGIGSHVHWDRKLDARLAGALMSIQAIKGVEIGEGFANAHRRGSAAHDEIYPAEGERWVRRGSNRAGGLEGGITNGEPLVVRAAKKPISSLPRALATVDVVTGEPAQAMHQRSDITAVPRAAVVAETMVALVLAEAVLEKFGGDSLPETRRNVEGYLAGLRERAEKRQVR.

The NADP(+) site is built by Arg40 and Arg46. FMN is bound by residues 135-137, 256-257, Gly302, 317-321, and Arg343; these read RAS, QA, and KPISS.

The protein belongs to the chorismate synthase family. In terms of assembly, homotetramer. It depends on FMNH2 as a cofactor.

The enzyme catalyses 5-O-(1-carboxyvinyl)-3-phosphoshikimate = chorismate + phosphate. It functions in the pathway metabolic intermediate biosynthesis; chorismate biosynthesis; chorismate from D-erythrose 4-phosphate and phosphoenolpyruvate: step 7/7. Catalyzes the anti-1,4-elimination of the C-3 phosphate and the C-6 proR hydrogen from 5-enolpyruvylshikimate-3-phosphate (EPSP) to yield chorismate, which is the branch point compound that serves as the starting substrate for the three terminal pathways of aromatic amino acid biosynthesis. This reaction introduces a second double bond into the aromatic ring system. The chain is Chorismate synthase from Saccharopolyspora erythraea (strain ATCC 11635 / DSM 40517 / JCM 4748 / NBRC 13426 / NCIMB 8594 / NRRL 2338).